Consider the following 299-residue polypeptide: Putative KilA-N domain-containing protein R879 (299 aa).

Positions 1–75 (MKSDNGILMS…IKVSEIVLSY (75 aa)) constitute a KilA-N domain. Positions 76 to 150 (HAKEAIKEKE…DKKINELLSK (75 aa)) form a coiled coil.

This chain is Putative KilA-N domain-containing protein R879, found in Acanthamoeba polyphaga mimivirus (APMV).